The sequence spans 850 residues: Bifunctional levopimaradiene synthase, chloroplastic (850 aa).

A chloroplast-targeting transit peptide spans 1–52 (MALPSSSLSSQIHTGATTQCIPHFHGSLNAGTSAGKRRSLYLRWGKGPSKIV). K250 contacts substrate. Residues D383 and D385 each coordinate Mg(2+). The DXDD motif motif lies at 383-386 (DIDD). K470 is a binding site for substrate. Mg(2+) is bound by residues D602, D606, N746, T750, and E754. The DDXXD motif motif lies at 602–606 (DDLYD).

Belongs to the terpene synthase family. Tpsd subfamily. Mg(2+) serves as cofactor.

It localises to the plastid. The protein resides in the chloroplast. The enzyme catalyses (2E,6E,10E)-geranylgeranyl diphosphate = (+)-copalyl diphosphate. It catalyses the reaction (+)-copalyl diphosphate = abieta-7,13-diene + diphosphate. It carries out the reaction (+)-copalyl diphosphate = abieta-8(14),12-diene + diphosphate. The catalysed reaction is (+)-copalyl diphosphate = neoabietadiene + diphosphate. It participates in terpene metabolism; oleoresin biosynthesis. Its function is as follows. Involved in defensive oleoresin formation in conifers in response to insect attack or other injury. Involved in diterpene (C20) olefins biosynthesis. Bifunctional enzyme that catalyzes two sequential cyclizations of geranylgeranyl diphosphate (GGPP) to levopimaradiene. Levopimaradiene is the major products of the enzyme with abietadiene and neoabietadiene. No activity with farnesyl diphosphate (FPP) as substrate. The chain is Bifunctional levopimaradiene synthase, chloroplastic from Pinus contorta (Shore pine).